Consider the following 1284-residue polypeptide: Collagen alpha-1(XX) chain (1284 aa).

Positions 1 to 22 (MSSGDPAHLGLCLWLWLGATLG) are cleaved as a signal peptide. Residues 28 to 119 (ASGLLRLAVL…EFVIEDLKSS (92 aa)) enclose the Fibronectin type-III 1 domain. Positions 122-171 (DRSSQRPLGSGAPEPTPSHTGSPDPEQASEPQVAFTPSQDPRTPAGPQFR) are disordered. Residues 179 to 354 (DMVFLVDGSW…GALAGLLSRL (176 aa)) enclose the VWFA domain. 5 consecutive Fibronectin type-III domains span residues 379–468 (APTS…APLP), 469–559 (PPRA…TLAP), 560–647 (PRHL…TKKA), 649–738 (SPSQ…TPST), and 743–833 (PPSN…ACPA). Asparagine 607 is a glycosylation site (N-linked (GlcNAc...) asparagine). The region spanning 842–1037 (GFDLMVAFSL…LQMLQIVCSD (196 aa)) is the Laminin G-like domain. 2 disordered regions span residues 1065 to 1190 (SCSS…EKGE) and 1212 to 1284 (SFHE…GLWE). Residues 1071-1082 (PGPPGPQGPPGL) show a composition bias toward pro residues. Collagen-like domains lie at 1071–1127 (PGPP…IPGR) and 1133–1190 (PKGM…EKGE). 2 stretches are compositionally biased toward low complexity: residues 1112 to 1125 (LPGL…QGIP) and 1166 to 1181 (ERGP…LPGP). A compositionally biased stretch (polar residues) spans 1271-1284 (SPGQQGASTQGLWE).

As to expression, high expression in heart, lung, liver, skeletal muscle, kidney, pancreas, spleen, testis, ovary, subthalamic nucleus and fetal liver. Weak expression in other tissues tested.

The protein localises to the secreted. Its subcellular location is the extracellular space. In terms of biological role, probable collagen protein. The protein is Collagen alpha-1(XX) chain (COL20A1) of Homo sapiens (Human).